The chain runs to 42 residues: Photosystem II reaction center protein J (42 aa).

The chain crosses the membrane as a helical span at residues 10-30 (IPLWLVGTVAGTAAIGLLGIF).

It belongs to the PsbJ family. PSII is composed of 1 copy each of membrane proteins PsbA, PsbB, PsbC, PsbD, PsbE, PsbF, PsbH, PsbI, PsbJ, PsbK, PsbL, PsbM, PsbT, PsbX, PsbY, PsbZ, Psb30/Ycf12, at least 3 peripheral proteins of the oxygen-evolving complex and a large number of cofactors. It forms dimeric complexes.

It is found in the plastid. Its subcellular location is the chloroplast thylakoid membrane. Functionally, one of the components of the core complex of photosystem II (PSII). PSII is a light-driven water:plastoquinone oxidoreductase that uses light energy to abstract electrons from H(2)O, generating O(2) and a proton gradient subsequently used for ATP formation. It consists of a core antenna complex that captures photons, and an electron transfer chain that converts photonic excitation into a charge separation. This chain is Photosystem II reaction center protein J, found in Pleurastrum terricola (Filamentous green alga).